The sequence spans 326 residues: 4-hydroxythreonine-4-phosphate dehydrogenase (326 aa).

Positions 132 and 133 each coordinate substrate. His-163, His-208, and His-263 together coordinate a divalent metal cation. The substrate site is built by Lys-271, Asn-280, and Arg-289.

Belongs to the PdxA family. In terms of assembly, homodimer. Zn(2+) is required as a cofactor. It depends on Mg(2+) as a cofactor. Co(2+) serves as cofactor.

Its subcellular location is the cytoplasm. The catalysed reaction is 4-(phosphooxy)-L-threonine + NAD(+) = 3-amino-2-oxopropyl phosphate + CO2 + NADH. Its pathway is cofactor biosynthesis; pyridoxine 5'-phosphate biosynthesis; pyridoxine 5'-phosphate from D-erythrose 4-phosphate: step 4/5. Its function is as follows. Catalyzes the NAD(P)-dependent oxidation of 4-(phosphooxy)-L-threonine (HTP) into 2-amino-3-oxo-4-(phosphooxy)butyric acid which spontaneously decarboxylates to form 3-amino-2-oxopropyl phosphate (AHAP). This Roseobacter denitrificans (strain ATCC 33942 / OCh 114) (Erythrobacter sp. (strain OCh 114)) protein is 4-hydroxythreonine-4-phosphate dehydrogenase.